We begin with the raw amino-acid sequence, 337 residues long: Protein MICROTUBULE BINDING PROTEIN 2C (337 aa).

The interval 80-147 (RGSMTYTKMP…STSSLTEKDR (68 aa)) is disordered. Basic and acidic residues predominate over residues 89-103 (PSRESLYKKTSEVKG). Polar residues predominate over residues 120–142 (KNVSSSQDGYAENFSTPSSTSSL). 3 coiled-coil regions span residues 143–194 (TEKD…MKKD), 223–250 (VEKL…LQGE), and 294–314 (LQKM…AKEN).

This sequence belongs to the microtubule binding protein 2C family. Interacts with KN-1. Binds to tobacco mosaic virus movement protein (TMV-MP) at microtubules. As to expression, constitutively expressed in leaves.

It localises to the cytoplasm. Its subcellular location is the cytoskeleton. In terms of biological role, prevents homeodomain proteins (e.g. STM) association to plasmodesmata and, consequently, cell-to-cell transport. Binds to RNA. Alters KN1 RNA-binding capacity. Regulates cytoskeleton (e.g. actin) organization that determinates cell shape. Interferes with cell-to-cell transport of tobacco mosaic virus movement protein (TMV-MP) by mediating its accumulation at microtubules, thus interfering with cell-to-cell virus movement. The protein is Protein MICROTUBULE BINDING PROTEIN 2C of Nicotiana tabacum (Common tobacco).